A 382-amino-acid chain; its full sequence is ATP phosphoribosyltransferase regulatory subunit (382 aa).

It belongs to the class-II aminoacyl-tRNA synthetase family. HisZ subfamily. Heteromultimer composed of HisG and HisZ subunits.

Its subcellular location is the cytoplasm. It participates in amino-acid biosynthesis; L-histidine biosynthesis; L-histidine from 5-phospho-alpha-D-ribose 1-diphosphate: step 1/9. Functionally, required for the first step of histidine biosynthesis. May allow the feedback regulation of ATP phosphoribosyltransferase activity by histidine. The protein is ATP phosphoribosyltransferase regulatory subunit of Acidovorax ebreus (strain TPSY) (Diaphorobacter sp. (strain TPSY)).